Here is a 240-residue protein sequence, read N- to C-terminus: MKRPSGRAADQLRSIRITRNYTKHAEGSVLVEFGDTKVICTVSVENGVPRFLKGQGQGWLTAEYGMLPRATGERNQREASRGKQGGRTLEIQRLIGRSLRAALDMSKLGDVTLYVDCDVIQADGGTRTASITGAMVALADALKVIKKRGGLKGGDPLKQMIAAVSVGMYQGEPVLDLDYLEDSAAETDLNVVMTSAGGFIEVQGTAEGAPFQPEELNAMLALAQKGMTELFEMQRAALAD.

Residues Arg87 and 125–127 contribute to the phosphate site; that span reads GTR.

Belongs to the RNase PH family. Homohexameric ring arranged as a trimer of dimers.

The catalysed reaction is tRNA(n+1) + phosphate = tRNA(n) + a ribonucleoside 5'-diphosphate. In terms of biological role, phosphorolytic 3'-5' exoribonuclease that plays an important role in tRNA 3'-end maturation. Removes nucleotide residues following the 3'-CCA terminus of tRNAs; can also add nucleotides to the ends of RNA molecules by using nucleoside diphosphates as substrates, but this may not be physiologically important. Probably plays a role in initiation of 16S rRNA degradation (leading to ribosome degradation) during starvation. In Pseudomonas syringae pv. tomato (strain ATCC BAA-871 / DC3000), this protein is Ribonuclease PH.